A 283-amino-acid chain; its full sequence is Tetraspanin-33 (283 aa).

Residues 1-24 (MARRPGVPAAYGDEFSFVSPLVKY) lie on the Cytoplasmic side of the membrane. Residues 25–45 (LLFFFNMLFWVISMVMVAVGV) form a helical membrane-spanning segment. At 46 to 64 (YARLMKHAEAALACLAVDP) the chain is on the extracellular side. Residues 65-85 (AILLIVVGVLMFLLTFCGCIG) form a helical membrane-spanning segment. Over 86-96 (SLRENICLLQT) the chain is Cytoplasmic. A helical transmembrane segment spans residues 97-117 (FSLCLTIVFLLQLAAGILGFV). Topologically, residues 118 to 235 (FSDKARGKVS…DKLVNWIHSN (118 aa)) are extracellular. Intrachain disulfides connect Cys156/Cys224, Cys157/Cys189, Cys173/Cys183, and Cys190/Cys203. Asn172 carries N-linked (GlcNAc...) asparagine glycosylation. Residues 236-256 (LFLLGGVALGLAIPQLVGILL) traverse the membrane as a helical segment. At 257–283 (SQVLVNQIKDQIKLQLYNQQHRADPWY) the chain is on the cytoplasmic side.

Belongs to the tetraspanin (TM4SF) family. In terms of assembly, homodimer; disulfide-linked. Interacts (via extracellular domain) with ADAM10 (via extracellular domain). Interacts (via cytoplasmic domain) with PLEKHA7 (via WW domains); the interaction is dependent on PDZD11 being bound to PLEKHA7 and facilitates the docking of ADAM10 to zonula adherens. In terms of tissue distribution, predominantly expressed in erythroblasts.

The protein resides in the cell membrane. It is found in the cell junction. Its subcellular location is the adherens junction. It localises to the cytoplasm. Functionally, part of TspanC8 subgroup, composed of 6 members that interact with the transmembrane metalloprotease ADAM10. This interaction is required for ADAM10 exit from the endoplasmic reticulum and for enzymatic maturation and trafficking to the cell surface as well as substrate specificity. Different TspanC8/ADAM10 complexes have distinct substrates. Plays an important role in normal erythropoiesis. It has a role in the differentiation of erythroid progenitors. Negatively regulates ligand-induced Notch activity probably by regulating ADAM10 activity. Mediates docking of ADAM10 to zonula adherens by interacting with ADAM10 and, in a PDZD11-dependent manner, with the zonula adherens protein PLEKHA7. This Mus musculus (Mouse) protein is Tetraspanin-33 (Tspan33).